The chain runs to 485 residues: GTPase Obg (485 aa).

In terms of domain architecture, Obg spans 1–159 (MKFVDEVRIF…LTLRLELKLL (159 aa)). The OBG-type G domain maps to 160–332 (ADVGLLGFPN…LMDSVAEVLF (173 aa)). Residues 166-173 (GFPNAGKS), 191-195 (FTTLV), 213-216 (DIPG), 284-287 (NKLD), and 313-315 (SCA) each bind GTP. Residues Ser173 and Thr193 each coordinate Mg(2+). Composition is skewed to low complexity over residues 367–385 (AGAA…AAKK), 394–428 (RKAG…PVKK), 437–446 (RKSGTAPAKK), and 455–474 (RKSG…ATKR). Positions 367-485 (AGAAAATKSA…PARKSGGGRS (119 aa)) are disordered.

Belongs to the TRAFAC class OBG-HflX-like GTPase superfamily. OBG GTPase family. As to quaternary structure, monomer. Requires Mg(2+) as cofactor.

It is found in the cytoplasm. Its function is as follows. An essential GTPase which binds GTP, GDP and possibly (p)ppGpp with moderate affinity, with high nucleotide exchange rates and a fairly low GTP hydrolysis rate. Plays a role in control of the cell cycle, stress response, ribosome biogenesis and in those bacteria that undergo differentiation, in morphogenesis control. The protein is GTPase Obg of Myxococcus xanthus (strain DK1622).